A 300-amino-acid chain; its full sequence is Eukaryotic translation initiation factor 3 subunit F (300 aa).

The 137-residue stretch at 33 to 169 (VKVHPVALFS…VQCYVSALLG (137 aa)) folds into the MPN domain.

It belongs to the eIF-3 subunit F family. As to quaternary structure, component of the eukaryotic translation initiation factor 3 (eIF-3) complex.

It is found in the cytoplasm. In terms of biological role, component of the eukaryotic translation initiation factor 3 (eIF-3) complex, which is involved in protein synthesis of a specialized repertoire of mRNAs and, together with other initiation factors, stimulates binding of mRNA and methionyl-tRNAi to the 40S ribosome. The eIF-3 complex specifically targets and initiates translation of a subset of mRNAs involved in cell proliferation. The sequence is that of Eukaryotic translation initiation factor 3 subunit F from Malassezia globosa (strain ATCC MYA-4612 / CBS 7966) (Dandruff-associated fungus).